The sequence spans 702 residues: MESPSAPPHRWCIPWQRLLLTASLLTFWNPPTTAKLTIESTPFNVAEGKEVLLLVHNLPQHLFGYSWYKGERVDGNRQIIGYVIGTQQATPGPAYSGREIIYPNASLLIQNIIQNDTGFYTLHVIKSDLVNEEATGQFRVYPELPKPSISSNNSKPVEDKDAVAFTCEPETQDATYLWWVNNQSLPVSPRLQLSNGNRTLTLFNVTRNDTASYKCETQNPVSARRSDSVILNVLYGPDAPTISPLNTSYRSGENLNLSCHAASNPPAQYSWFVNGTFQQSTQELFIPNITVNNSGSYTCQAHNSDTGLNRTTVTTITVYAEPPKPFITSNNSNPVEDEDAVALTCEPEIQNTTYLWWVNNQSLPVSPRLQLSNDNRTLTLLSVTRNDVGPYECGIQNELSVDHSDPVILNVLYGPDDPTISPSYTYYRPGVNLSLSCHAASNPPAQYSWLIDGNIQQHTQELFISNITEKNSGLYTCQANNSASGHSRTTVKTITVSAELPKPSISSNNSKPVEDKDAVAFTCEPEAQNTTYLWWVNGQSLPVSPRLQLSNGNRTLTLFNVTRNDARAYVCGIQNSVSANRSDPVTLDVLYGPDTPIISPPDSSYLSGANLNLSCHSASNPSPQYSWRINGIPQQHTQVLFIAKITPNNNGTYACFVSNLATGRNNSIVKSITVSASGTSPGLSAGATVGIMIGVLVGVALI.

The first 34 residues, 1–34 (MESPSAPPHRWCIPWQRLLLTASLLTFWNPPTTA), serve as a signal peptide directing secretion. Positions 35 to 144 (KLTIESTPFN…TGQFRVYPEL (110 aa)) constitute an Ig-like V-type domain. N-linked (GlcNAc...) asparagine glycosylation is found at N104, N115, N152, N182, N197, N204, N208, N246, N256, N274, N288, N292, N309, N330, N351, N360, N375, N432, N466, N480, N508, N529, N553, N560, N580, N612, N650, and N665. 6 consecutive Ig-like C2-type domains span residues 145-232 (PKPS…VILN), 240-315 (PTIS…TVTT), 323-410 (PKPF…VILN), 418-495 (PTIS…KTIT), 501-588 (PKPS…VTLD), and 593-675 (PDTP…ITVS). The cysteines at positions 167 and 215 are disulfide-linked. An intrachain disulfide couples C259 to C299. The cysteines at positions 345 and 393 are disulfide-linked. An intrachain disulfide couples C437 to C477. C523 and C571 form a disulfide bridge. C615 and C655 are oxidised to a cystine. The GPI-anchor amidated alanine moiety is linked to residue A685. Positions 686-702 (GATVGIMIGVLVGVALI) are cleaved as a propeptide — removed in mature form.

This sequence belongs to the immunoglobulin superfamily. CEA family. Homodimer. Post-translationally, complex immunoreactive glycoprotein with a MW of 180 kDa comprising 60% carbohydrate. As to expression, expressed in columnar epithelial and goblet cells of the colon (at protein level). Found in adenocarcinomas of endodermally derived digestive system epithelium and fetal colon.

It localises to the cell membrane. The protein resides in the apical cell membrane. The protein localises to the cell surface. Its function is as follows. Cell surface glycoprotein that plays a role in cell adhesion, intracellular signaling and tumor progression. Mediates homophilic and heterophilic cell adhesion with other carcinoembryonic antigen-related cell adhesion molecules, such as CEACAM6. Plays a role as an oncogene by promoting tumor progression; induces resistance to anoikis of colorectal carcinoma cells. Functionally, (Microbial infection) Receptor for E.coli Dr adhesins. Binding of E.coli Dr adhesins leads to dissociation of the homodimer. This Homo sapiens (Human) protein is Cell adhesion molecule CEACAM5.